Reading from the N-terminus, the 72-residue chain is Large ribosomal subunit protein uL29 (72 aa).

It belongs to the universal ribosomal protein uL29 family.

In Chlamydia muridarum (strain MoPn / Nigg), this protein is Large ribosomal subunit protein uL29 (rpmC).